A 499-amino-acid polypeptide reads, in one-letter code: Lipopolysaccharide core galacturonosyltransferase RgtA (499 aa).

10 helical membrane passes run 11-31, 74-94, 103-123, 125-145, 165-185, 199-219, 248-268, 291-311, 316-336, and 351-371; these read TAGL…IVLP, IGAL…FYGL, EALA…SYMA, QDLT…YGFF, IGLI…IAIL, MLAA…WLQG, LLAF…IFAA, MMLA…STTV, LDPF…AAGL, and VLMA…GLIG.

This sequence belongs to the glycosyltransferase 83 family.

The protein localises to the cell inner membrane. It functions in the pathway bacterial outer membrane biogenesis; LPS core biosynthesis. Functionally, involved in the modification of the lipopolysaccharide (LPS) inner core. Catalyzes the transfer of a galacturonic acid (GalA) residue to the 4-position of the outer Kdo (3-deoxy-D-manno-octulosonic acid) residue of the LPS inner core, using dodecaprenyl phosphate-GalA as the donor substrate. GalA addition by RgtA is required for RgtB activity. This Rhizobium johnstonii (strain DSM 114642 / LMG 32736 / 3841) (Rhizobium leguminosarum bv. viciae) protein is Lipopolysaccharide core galacturonosyltransferase RgtA.